A 1239-amino-acid chain; its full sequence is DNA topoisomerase 2 (1239 aa).

Residues Asn65, Asn96, 124–126 (SSN), 137–144 (GRHGYGAK), and 354–356 (QSK) contribute to the ATP site. The Toprim domain occupies 434 to 548 (RTLIVTEGDS…SLLQHNPGYI (115 aa)). The Mg(2+) site is built by Glu440, Asp517, and Asp519. The 417-residue stretch at 685–1101 (IPHCVDGLKP…TPVKMWLTDL (417 aa)) folds into the Topo IIA-type catalytic domain. The active-site O-(5'-phospho-DNA)-tyrosine intermediate is the Tyr775. An interaction with DNA region spans residues 956-965 (ALSQRIYING). Residues 1167-1206 (PASKRKPEDTYGGALSSGGSTRNVGKRLTGARGAKKKKVV) form a disordered region.

Belongs to the type II topoisomerase family. Homodimer. It depends on Mg(2+) as a cofactor. The cofactor is Mn(2+). Ca(2+) serves as cofactor.

Its subcellular location is the nucleus. The protein resides in the mitochondrion matrix. The protein localises to the kinetoplast. The catalysed reaction is ATP-dependent breakage, passage and rejoining of double-stranded DNA.. Functionally, control of topological states of DNA by transient breakage and subsequent rejoining of DNA strands. Topoisomerase II makes double-strand breaks. The protein is DNA topoisomerase 2 (TOP2) of Crithidia fasciculata.